An 802-amino-acid chain; its full sequence is Acetyl-CoA decarbonylase/synthase complex subunit alpha (802 aa).

6 residues coordinate [4Fe-4S] cluster: Cys-69, Cys-72, Cys-73, Cys-75, Cys-80, and Cys-90. Residue His-113 participates in CO binding. Residues His-246, Cys-274, and Cys-319 each contribute to the [Ni-4Fe-4S] cluster site. 4Fe-4S ferredoxin-type domains lie at 404–432 and 442–473; these read EELKELADSCVHCLKCEVACPNSLPISEA and SKFELLHDKCIACGRCEYACPKDIDIVNVIEK. [4Fe-4S] cluster contacts are provided by Cys-413, Cys-416, Cys-419, Cys-423, Cys-451, Cys-454, Cys-457, and Cys-461. 3 residues coordinate [Ni-4Fe-4S] cluster: Cys-519, Cys-548, and Cys-583.

The protein belongs to the Ni-containing carbon monoxide dehydrogenase family. In terms of assembly, heterotetramer of two alpha and two epsilon subunits. The ACDS complex is made up of alpha, epsilon, beta, gamma and delta subunits with a probable stoichiometry of (alpha(2)epsilon(2))(4)-beta(8)-(gamma(1)delta(1))(8). [4Fe-4S] cluster is required as a cofactor. It depends on [Ni-4Fe-4S] cluster as a cofactor.

The catalysed reaction is CO + 2 oxidized [2Fe-2S]-[ferredoxin] + H2O = 2 reduced [2Fe-2S]-[ferredoxin] + CO2 + 2 H(+). It functions in the pathway one-carbon metabolism; methanogenesis from acetate. Its function is as follows. Part of the ACDS complex that catalyzes the reversible cleavage of acetyl-CoA, allowing growth on acetate as sole source of carbon and energy. The alpha-epsilon subcomponent functions as a carbon monoxide dehydrogenase. The sequence is that of Acetyl-CoA decarbonylase/synthase complex subunit alpha from Methanococcoides burtonii (strain DSM 6242 / NBRC 107633 / OCM 468 / ACE-M).